Here is a 620-residue protein sequence, read N- to C-terminus: MTTTDTAPQSQPFQAEVAELLNLMVHSVYSETDIFLRELISNASDALDKLRYESIAKPELMADGGEPKIRILPKKEPDTLSVIDNGLGMDRQELIDNLGTIAKSGTKSFLTKLTEAKDGAGLIGQFGVGFYAAFMVADRIVVTSRRARSAEAWTWSSSGGAGFEIAPASEEDAARVTRGTEIVLHLKKDAAKYLEPYEIERVVGAYSDNIQFPIELVPEEGEPRQINSASALWQRSKSELTAEDYSQAYKQIAGAFDEPAMTLHYRAEGRYSYAVLLFAPSTKPFDLFEPARKGRVKLYVRRVFITDEADLLPSYLRFIRGVIDSEDLPLNLSREMLQNNPQLAQIRKAVTGKVIGELESLGDKDPEAFGKIWDAFGLVIKEGIWEDYERRDKLLALSRFTTTKGENRTLKQYVEDLKENQTEIYYLVGDSIERLKSNPKLESAAARGIEVLLLTDPVDAFWTSAPLDFGGKPLKSLSQGDVDFGQIPTTEENKDEQAKPETDEALTIAAIKDALGDKVSDVRASQRLTASASCLVAGGLGPDRALERMLAQQNRGAASKPILEVNLRHPIVAAVAKANAADAADLSLLLLEQAQILDGELPEDPAAFSARLNRLVLRAL.

Positions 1–334 (MTTTDTAPQS…SEDLPLNLSR (334 aa)) are a; substrate-binding. A b region spans residues 335-548 (EMLQNNPQLA…GLGPDRALER (214 aa)). The tract at residues 549–620 (MLAQQNRGAA…RLNRLVLRAL (72 aa)) is c.

It belongs to the heat shock protein 90 family. In terms of assembly, homodimer.

It is found in the cytoplasm. Molecular chaperone. Has ATPase activity. This chain is Chaperone protein HtpG, found in Rhodopseudomonas palustris (strain BisB18).